An 86-amino-acid chain; its full sequence is Putative membrane protein insertion efficiency factor (86 aa).

A disordered region spans residues 66 to 86 (AGGHDPVPPVPPQRYPSAQEH).

Belongs to the UPF0161 family.

The protein resides in the cell inner membrane. Its function is as follows. Could be involved in insertion of integral membrane proteins into the membrane. The chain is Putative membrane protein insertion efficiency factor from Nitratidesulfovibrio vulgaris (strain ATCC 29579 / DSM 644 / CCUG 34227 / NCIMB 8303 / VKM B-1760 / Hildenborough) (Desulfovibrio vulgaris).